The primary structure comprises 698 residues: Polyribonucleotide nucleotidyltransferase (698 aa).

Aspartate 490 and aspartate 496 together coordinate Mg(2+). The region spanning 557–616 is the KH domain; sequence PKVVTMTIKPDKIRDVIGPGGKKINEIIDETGVKLDIEQDGTIFIGAVDQAMINRAREII. The region spanning 626 to 694 is the S1 motif domain; the sequence is GQTYQATVKR…KQGRVNASHR (69 aa).

Belongs to the polyribonucleotide nucleotidyltransferase family. It depends on Mg(2+) as a cofactor.

Its subcellular location is the cytoplasm. The catalysed reaction is RNA(n+1) + phosphate = RNA(n) + a ribonucleoside 5'-diphosphate. Its function is as follows. Involved in mRNA degradation. Catalyzes the phosphorolysis of single-stranded polyribonucleotides processively in the 3'- to 5'-direction. In Staphylococcus aureus (strain MRSA252), this protein is Polyribonucleotide nucleotidyltransferase.